A 115-amino-acid polypeptide reads, in one-letter code: MTARYLGMNRSDGLTVTDLEHISQSIGDILRTPVGSRVMRRDYGSLLASMIDQPQTPALELQIKVACYMAVLKWEPRVTLSSVTTARSFDGRMTVTLTGQHNDTGQPLSLTIPVS.

Belongs to the GpW/Gp25 family.

It localises to the virion. Its function is as follows. Baseplate protein that is part of the outer wedges of the baseplate. Probably plays a role as a connector between the central and peripheral parts of the baseplate. Plays a role in tail assembly. This Escherichia phage P2 (Bacteriophage P2) protein is Baseplate protein W (W).